Reading from the N-terminus, the 876-residue chain is Alanine--tRNA ligase (876 aa).

Zn(2+) contacts are provided by H562, H566, C666, and H670.

This sequence belongs to the class-II aminoacyl-tRNA synthetase family. Zn(2+) serves as cofactor.

It localises to the cytoplasm. The enzyme catalyses tRNA(Ala) + L-alanine + ATP = L-alanyl-tRNA(Ala) + AMP + diphosphate. In terms of biological role, catalyzes the attachment of alanine to tRNA(Ala) in a two-step reaction: alanine is first activated by ATP to form Ala-AMP and then transferred to the acceptor end of tRNA(Ala). Also edits incorrectly charged Ser-tRNA(Ala) and Gly-tRNA(Ala) via its editing domain. The protein is Alanine--tRNA ligase of Marinobacter nauticus (strain ATCC 700491 / DSM 11845 / VT8) (Marinobacter aquaeolei).